The primary structure comprises 668 residues: Lebercilin-like protein (668 aa).

Positions 17-44 (SVALENNRRSAECKRSPGTGDFSRNSSA) are disordered. Residues 22-31 (NNRRSAECKR) are compositionally biased toward basic and acidic residues. Coiled-coil stretches lie at residues 148–259 (LHKI…EREE) and 305–336 (AAQT…IKNI). A disordered region spans residues 351-402 (YPKVSSTKSVQADRKSLPFTSMRHQGTQKSDVPPLTTKGKKATGNMNHKEKS). A compositionally biased stretch (polar residues) spans 368–380 (PFTSMRHQGTQKS). Positions 420-440 (EDSKTKYEDLSREEKHLEVQV) form a coiled coil. Disordered regions lie at residues 495 to 520 (RSMQ…PLRQ), 533 to 581 (LHHG…FGKS), and 605 to 668 (SGYV…KIII). A compositionally biased stretch (polar residues) spans 546–558 (AGNTKYSHSTSKH). Composition is skewed to basic and acidic residues over residues 560-572 (SNRE…HSDS) and 621-632 (GSEEPLQSKESH). Polar residues predominate over residues 633–660 (PPSQASASNAFGDSKVTVVNSIKPSSPT).

This sequence belongs to the LCA5 family.

The chain is Lebercilin-like protein from Macaca fascicularis (Crab-eating macaque).